The chain runs to 59 residues: Large ribosomal subunit protein bL32c (59 aa).

A disordered region spans residues 37-59; it reads SRSFSRGNEHPKPKGFSGQQANK.

The protein belongs to the bacterial ribosomal protein bL32 family.

It is found in the plastid. Its subcellular location is the chloroplast. This is Large ribosomal subunit protein bL32c (rpl32) from Zea mays (Maize).